Reading from the N-terminus, the 1171-residue chain is APC-related protein 1 (1171 aa).

Residues 1–54 (MSSSSSDENETTIHSSSNPGSSGIYSQLKAGSSKRPSVRHDVSDAEDDEEPYEG) form a disordered region. The segment at 1-481 (MSSSSSDENE…LSLRATRASP (481 aa)) is required for interaction with bar-1 and hmp-2. Over residues 15 to 26 (SSSNPGSSGIYS) the composition is skewed to low complexity. An ARM repeat occupies 312–356 (NCLKVLANILSPDARFTTLVDSASGILKYVSQYLATNSSHLELRS). 6 disordered regions span residues 587–617 (PVDD…NPGS), 662–699 (HPED…GTTV), 720–741 (RKTS…LEVE), 767–822 (EEMP…EMTT), 837–936 (PRSR…TMRI), and 995–1030 (SSGS…SSLP). Positions 591 to 1171 (DLDIPTSTVM…NPKQMLVTIV (581 aa)) are required for interaction with pry-1. Polar residues-rich tracts occupy residues 595-617 (PTST…NPGS) and 666-697 (NQMT…SDGT). The span at 788–799 (FSPSQKTTSSPA) shows a compositional bias: polar residues. The span at 857-874 (EPDRSSHSKNEEADRRDA) shows a compositional bias: basic and acidic residues. Composition is skewed to polar residues over residues 890–913 (RGSS…SSED) and 1002–1028 (LQKA…SVSS).

This sequence belongs to the adenomatous polyposis coli (APC) family. In terms of assembly, interacts (via N-terminus) with bar-1 and hmp-2; the interaction with hmp-2 is relatively weak. Interacts (via C-terminus) with pry-1 (via N-terminus). Probably associates with bar-1, gsk-3, pry-1 in a complex.

It is found in the cell junction. Its subcellular location is the adherens junction. It localises to the cytoplasm. The protein localises to the nucleus. In terms of biological role, has a role in endoderm cell specification and pharyngeal development. Required for the migration of epithelial cells, organization of the anterior seam cells and ceh-13 expression during embryo morphogenesis. Prevents hyperactivation of the Wnt signaling pathway during endoderm development, probably by preventing hmp-2 nuclear translocation. During larval development, apr-1 is required for expression of lin-39 in P3-8.p. Shown to negatively regulate Wnt signaling in vulval precursor cells. Has a role in cell division by establishing the polarity of the mother cell which forms the asymmetries of the daughter nuclei. Thought to regulate export of wrm-1 from the nucleus possibly as part of a complex involving pry-1. This is APC-related protein 1 from Caenorhabditis briggsae.